The following is a 532-amino-acid chain: MVDNTQITKTISLEDYGIKNATVHYQLSPEELHNKTIKLGQGVESSSGALAVNTGEFTGRSPKDRFIVKDEVTKDKVWWGDINIPFDTKKFDSLYNKVAEYLGDKDVYARDAYACADEKYRLNIRVLNEYPWSNLFAFNMFLRPENQELDNFKEDWLVLNAPGFKANPEVDGTRQENFAILNFSKKIALIGGTGYTGEIKKGIFSALNFVLPVYENTLPMHCSANVGEDGDTAIFFGLSGTGKTTLSADPERKLIGDDEHGWTKENTIFNFEGGCYAKVINLSEENEPDIYKAIKPGAILENVALDANGDVDFEDVTITQNTRVSYPINHINNIQKPSTGENPKNIFFLTADAFGVLPPISKLTPGQAAYHFISGYTAKVAGTEAGVDEPVPSFSACFGAPFMPLHPTEYAEMLSKKMKAADVNVWLVNTGWTGGPYGVGSRMKLKYTREMISSALEGKLENVDYEKHNIFGLEMPKTCEGVPSEVLNPRNTWKDQNAYDLKAKELSNFFRKNFRKFEEYANEEIMNGAPVE.

3 residues coordinate substrate: arginine 60, tyrosine 195, and lysine 201. ATP-binding positions include lysine 201, histidine 221, and 237–245 (GLSGTGKTT). Residues lysine 201 and histidine 221 each coordinate Mn(2+). A Mn(2+)-binding site is contributed by aspartate 258. The ATP site is built by glutamate 287, arginine 323, and threonine 448. Residue arginine 323 participates in substrate binding.

Belongs to the phosphoenolpyruvate carboxykinase (ATP) family. Requires Mn(2+) as cofactor.

The protein resides in the cytoplasm. The enzyme catalyses oxaloacetate + ATP = phosphoenolpyruvate + ADP + CO2. The protein operates within carbohydrate biosynthesis; gluconeogenesis. Its function is as follows. Involved in the gluconeogenesis. Catalyzes the conversion of oxaloacetate (OAA) to phosphoenolpyruvate (PEP) through direct phosphoryl transfer between the nucleoside triphosphate and OAA. This Christiangramia forsetii (strain DSM 17595 / CGMCC 1.15422 / KT0803) (Gramella forsetii) protein is Phosphoenolpyruvate carboxykinase (ATP).